Here is a 463-residue protein sequence, read N- to C-terminus: DDB1- and CUL4-associated factor 12-like protein 1 (463 aa).

A disordered region spans residues 1-35; sequence MAQQQTGSRKRKAPAVEADAESSPSQGLAAADGEG. WD repeat units follow at residues 87–137, 138–184, 185–252, 253–297, 298–341, and 342–376; these read LTER…PLLR, DSEA…SLDP, LCLG…DVEA, IPRA…ALSR, LLSI…QQNI, and RPLCSREGGTGVRSLSFYRHIITVGTGQGSLLFYD.

The protein belongs to the WD repeat DCAF12 family.

In Homo sapiens (Human), this protein is DDB1- and CUL4-associated factor 12-like protein 1 (DCAF12L1).